A 678-amino-acid polypeptide reads, in one-letter code: Penicillin-binding protein activator LpoA (678 aa).

Positions 1 to 26 (MVPSTFSRLKAARCLPVVLAALIFAG) are cleaved as a signal peptide. A lipid anchor (N-palmitoyl cysteine) is attached at Cys-27. Cys-27 carries S-diacylglycerol cysteine lipidation. 2 disordered regions span residues 302-340 (DVAE…PVSA) and 496-528 (ALTG…DDQF). Low complexity-rich tracts occupy residues 330–340 (QPAAQPVPVSA) and 513–528 (TTNN…DDQF).

Belongs to the LpoA family. Interacts with PBP1a.

The protein resides in the cell outer membrane. Regulator of peptidoglycan synthesis that is essential for the function of penicillin-binding protein 1A (PBP1a). This is Penicillin-binding protein activator LpoA from Shigella sonnei (strain Ss046).